A 433-amino-acid polypeptide reads, in one-letter code: Eukaryotic peptide chain release factor subunit 1 (433 aa).

Position 182 is an N5-methylglutamine (Gln182). Ser425 carries the phosphoserine modification.

The protein belongs to the eukaryotic release factor 1 family. As to quaternary structure, component of the eRF1-eRF3-GTP ternary complex, composed of sup45/eRF1, sup35/eRF3 and GTP.

It is found in the cytoplasm. Functionally, component of the eRF1-eRF3-GTP ternary complex, a ternary complex that mediates translation termination in response to the termination codons. The eRF1-eRF3-GTP complex binds to a stop codon in the ribosomal A-site. Sup45/eRF1 is responsible for stop codon recognition and inducing hydrolysis of peptidyl-tRNA. Following GTP hydrolysis by sup35/eRF3, sup35/eRF3 dissociates, permitting sup45/eRF1 to accommodate fully in the A-site. The protein is Eukaryotic peptide chain release factor subunit 1 (sup45) of Schizosaccharomyces pombe (strain 972 / ATCC 24843) (Fission yeast).